Here is a 119-residue protein sequence, read N- to C-terminus: Large ribosomal subunit protein bL20 (119 aa).

Belongs to the bacterial ribosomal protein bL20 family.

Binds directly to 23S ribosomal RNA and is necessary for the in vitro assembly process of the 50S ribosomal subunit. It is not involved in the protein synthesizing functions of that subunit. The sequence is that of Large ribosomal subunit protein bL20 from Ruthia magnifica subsp. Calyptogena magnifica.